The primary structure comprises 280 residues: Shikimate kinase (280 aa).

74-84 (PGGSGLGSSSA) is an ATP binding site.

This sequence belongs to the GHMP kinase family. Archaeal shikimate kinase subfamily.

The protein localises to the cytoplasm. It catalyses the reaction shikimate + ATP = 3-phosphoshikimate + ADP + H(+). Its pathway is metabolic intermediate biosynthesis; chorismate biosynthesis; chorismate from D-erythrose 4-phosphate and phosphoenolpyruvate: step 5/7. This is Shikimate kinase (aroK) from Archaeoglobus fulgidus (strain ATCC 49558 / DSM 4304 / JCM 9628 / NBRC 100126 / VC-16).